The following is a 184-amino-acid chain: Ribonuclease HII (184 aa).

One can recognise an RNase H type-2 domain in the interval 2-184 (AKICGIDEAG…KPKLAQSSLF (183 aa)). Residues Asp8, Glu9, and Asp95 each contribute to the a divalent metal cation site.

It belongs to the RNase HII family. Requires Mn(2+) as cofactor. Mg(2+) serves as cofactor.

Its subcellular location is the cytoplasm. It carries out the reaction Endonucleolytic cleavage to 5'-phosphomonoester.. Functionally, endonuclease that specifically degrades the RNA of RNA-DNA hybrids. The chain is Ribonuclease HII from Campylobacter concisus (strain 13826).